We begin with the raw amino-acid sequence, 728 residues long: Microtubule-associated protein VP5 (728 aa).

The protein belongs to the reoviridae microtubule-associated protein family.

It is found in the virion. The protein resides in the host cytoplasm. It localises to the host cytoskeleton. Its function is as follows. Minor inner capsid component. Displays NTPase and RNA 5'-triphosphatase (RTPase) activities. May function as a cofactor of polymerase. Associates with microtubules and plays a role in the formation, structural organization and morphology of viral inclusions, where the assembly of cores and the replication of viral RNA occur. In Ctenopharyngodon idella (Grass carp), this protein is Microtubule-associated protein VP5 (S5).